Here is an 87-residue protein sequence, read N- to C-terminus: MTKVFCKKYHQELDAIPFQPLPGELGKKIHNEISNKAWQAWLAHQTILINEYRLNLIEPKAKEFLKEEMYKFLFEGKEEKPEQFSEI.

The protein belongs to the Fe(2+)-trafficking protein family.

Its function is as follows. Could be a mediator in iron transactions between iron acquisition and iron-requiring processes, such as synthesis and/or repair of Fe-S clusters in biosynthetic enzymes. In Francisella tularensis subsp. holarctica (strain FTNF002-00 / FTA), this protein is Probable Fe(2+)-trafficking protein.